A 362-amino-acid chain; its full sequence is B3 domain-containing protein IDEF1 (362 aa).

The segment at 30–91 (VPFPNPFPAP…TPTPTPRGFA (62 aa)) is disordered. Residues 48-70 (PHNHNHNHNHNHNIHNSHNHNHN) show a composition bias toward basic residues. A DNA-binding region (TF-B3) is located at residues 253–355 (LRKELTKSDV…KFIIRGEKAI (103 aa)).

Post-translationally, polyubiquitinated. Ubiquitination leads to its subsequent degradation via the proteasome pathway. Expressed in roots.

The protein resides in the nucleus. In terms of biological role, transcription regulator involved in iron deficiency response and tolerance. May regulate directly iron transporters or other transcription factors involved in iron-deficiency response. Binds specifically to the DNA sequence 5'-CATGC-3' of the IDE1 element found in the promoter of the barley iron deficiency-inducible gene IDS2. This is B3 domain-containing protein IDEF1 (IDEF1) from Oryza sativa subsp. japonica (Rice).